The chain runs to 158 residues: UPF0266 membrane protein YobD (158 aa).

Helical transmembrane passes span 6-26, 45-65, and 67-87; these read LVLILFIAALLAFAIYDQFIM, IDSVIFVGLIVILIYNNVTNH, and ALITTWLLSALALMGFYIFWI.

Belongs to the UPF0266 family.

The protein localises to the cell inner membrane. The polypeptide is UPF0266 membrane protein YobD (Shigella boydii serotype 4 (strain Sb227)).